The sequence spans 180 residues: Secreted RxLR effector protein 5 (180 aa).

An N-terminal signal peptide occupies residues 1 to 24 (MRFYYTLLATAAALLVHSDALSAA). The short motif at 44-60 (RFLRRHTDSETTDNEER) is the RxLR-dEER element.

This sequence belongs to the RxLR effector family.

It is found in the secreted. The protein resides in the host cell. Functionally, secreted effector that partially suppresses elicitor-induced cell death in host and enhances virulence of P.parasitica. This Phytophthora nicotianae (Potato buckeye rot agent) protein is Secreted RxLR effector protein 5.